Reading from the N-terminus, the 313-residue chain is MKDVYGRELEDLRITLTHACNFTCFFCHMEGENDGDSLLSADQISLVAQIGMEFGIRTVKLTGGEPTLRRDLPEIISKLKEVGIKEVSMTTNGYLLKELAGKLKDAGLDRVNISLHSIDPVIFKEVTGVNVLSKVVEGIEEAKKVGLRPLKLNYVVTRKNAKGIFEFINFASSSNIDEIHLIELHPVGLGKEAFYTHVDMSDIEGRLNEDCTLVEIRNKHKRPRYKCGNLVVEVVKPYANPIFCSGCNRIRLTVDGKLKTCLYRDDKIIDISDIIKSSYSTEEKEELLREAYRLAILIREPNFRFRYETSKTG.

A Radical SAM core domain is found at 4 to 224 (VYGRELEDLR…EIRNKHKRPR (221 aa)). R13 contributes to the GTP binding site. [4Fe-4S] cluster-binding residues include C20, C24, and C27. GTP is bound at residue K60. G64 serves as a coordination point for S-adenosyl-L-methionine. T90 is a GTP binding site. S114 contributes to the S-adenosyl-L-methionine binding site. K151 provides a ligand contact to GTP. [4Fe-4S] cluster-binding residues include C244 and C247. 249–251 (RIR) lines the GTP pocket. A [4Fe-4S] cluster-binding site is contributed by C261.

It belongs to the radical SAM superfamily. MoaA family. [4Fe-4S] cluster serves as cofactor.

It carries out the reaction GTP + AH2 + S-adenosyl-L-methionine = (8S)-3',8-cyclo-7,8-dihydroguanosine 5'-triphosphate + 5'-deoxyadenosine + L-methionine + A + H(+). It participates in cofactor biosynthesis; molybdopterin biosynthesis. Catalyzes the cyclization of GTP to (8S)-3',8-cyclo-7,8-dihydroguanosine 5'-triphosphate. The polypeptide is Probable GTP 3',8-cyclase (Sulfolobus acidocaldarius (strain ATCC 33909 / DSM 639 / JCM 8929 / NBRC 15157 / NCIMB 11770)).